The primary structure comprises 127 residues: Secreted RxLR effector protein 3 (127 aa).

Residues 1–20 (MRPPLLLFLTVTVLVSCASA) form the signal peptide. Positions 30 to 48 (RSLRSIKTTTNDDAAEEER) match the RxLR-dEER motif.

The protein belongs to the RxLR effector family.

The protein localises to the secreted. It is found in the host cell. In terms of biological role, secreted effector that partially suppresses elicitor-induced cell death in host and enhances virulence of P.parasitica. The protein is Secreted RxLR effector protein 3 of Phytophthora nicotianae (Potato buckeye rot agent).